Here is a 258-residue protein sequence, read N- to C-terminus: Flagellar L-ring protein (258 aa).

An N-terminal signal peptide occupies residues 1 to 15; sequence MKRIVCLALFLSMTG. The N-palmitoyl cysteine moiety is linked to residue Cys-16. Cys-16 is lipidated: S-diacylglycerol cysteine.

It belongs to the FlgH family. In terms of assembly, the basal body constitutes a major portion of the flagellar organelle and consists of four rings (L,P,S, and M) mounted on a central rod.

It is found in the cell outer membrane. Its subcellular location is the bacterial flagellum basal body. In terms of biological role, assembles around the rod to form the L-ring and probably protects the motor/basal body from shearing forces during rotation. This chain is Flagellar L-ring protein, found in Vibrio atlanticus (strain LGP32) (Vibrio splendidus (strain Mel32)).